Consider the following 590-residue polypeptide: Phosphomethylpyrimidine synthase (590 aa).

Residues asparagine 197, methionine 226, tyrosine 255, histidine 291, 311-313, 352-355, and glutamate 391 contribute to the substrate site; these read SRG and DGLR. Residue histidine 395 participates in Zn(2+) binding. Substrate is bound at residue tyrosine 418. A Zn(2+)-binding site is contributed by histidine 459. Cysteine 539, cysteine 542, and cysteine 547 together coordinate [4Fe-4S] cluster.

This sequence belongs to the ThiC family. [4Fe-4S] cluster serves as cofactor.

It catalyses the reaction 5-amino-1-(5-phospho-beta-D-ribosyl)imidazole + S-adenosyl-L-methionine = 4-amino-2-methyl-5-(phosphooxymethyl)pyrimidine + CO + 5'-deoxyadenosine + formate + L-methionine + 3 H(+). It functions in the pathway cofactor biosynthesis; thiamine diphosphate biosynthesis. Catalyzes the synthesis of the hydroxymethylpyrimidine phosphate (HMP-P) moiety of thiamine from aminoimidazole ribotide (AIR) in a radical S-adenosyl-L-methionine (SAM)-dependent reaction. This Bacillus subtilis (strain 168) protein is Phosphomethylpyrimidine synthase.